Here is a 417-residue protein sequence, read N- to C-terminus: Tyrosine--tRNA ligase (417 aa).

L-tyrosine is bound at residue Y36. The 'HIGH' region signature appears at 41-50 (PTADSLHIGH). 2 residues coordinate L-tyrosine: Y170 and Q174. A 'KMSKS' region motif is present at residues 231 to 235 (KFGKS). K234 serves as a coordination point for ATP. Residues 351–417 (TNLVELLIEA…GKKKYFMIIH (67 aa)) enclose the S4 RNA-binding domain.

It belongs to the class-I aminoacyl-tRNA synthetase family. TyrS type 1 subfamily. Homodimer.

The protein localises to the cytoplasm. The enzyme catalyses tRNA(Tyr) + L-tyrosine + ATP = L-tyrosyl-tRNA(Tyr) + AMP + diphosphate + H(+). In terms of biological role, catalyzes the attachment of tyrosine to tRNA(Tyr) in a two-step reaction: tyrosine is first activated by ATP to form Tyr-AMP and then transferred to the acceptor end of tRNA(Tyr). The sequence is that of Tyrosine--tRNA ligase from Macrococcus caseolyticus (strain JCSC5402) (Macrococcoides caseolyticum).